We begin with the raw amino-acid sequence, 219 residues long: Phosphatidylserine decarboxylase proenzyme (219 aa).

The Schiff-base intermediate with substrate; via pyruvic acid role is filled by serine 182. Serine 182 is subject to Pyruvic acid (Ser); by autocatalysis.

It belongs to the phosphatidylserine decarboxylase family. PSD-A subfamily. Heterodimer of a large membrane-associated beta subunit and a small pyruvoyl-containing alpha subunit. The cofactor is pyruvate. In terms of processing, is synthesized initially as an inactive proenzyme. Formation of the active enzyme involves a self-maturation process in which the active site pyruvoyl group is generated from an internal serine residue via an autocatalytic post-translational modification. Two non-identical subunits are generated from the proenzyme in this reaction, and the pyruvate is formed at the N-terminus of the alpha chain, which is derived from the carboxyl end of the proenzyme. The post-translation cleavage follows an unusual pathway, termed non-hydrolytic serinolysis, in which the side chain hydroxyl group of the serine supplies its oxygen atom to form the C-terminus of the beta chain, while the remainder of the serine residue undergoes an oxidative deamination to produce ammonia and the pyruvoyl prosthetic group on the alpha chain.

The protein resides in the cell membrane. The enzyme catalyses a 1,2-diacyl-sn-glycero-3-phospho-L-serine + H(+) = a 1,2-diacyl-sn-glycero-3-phosphoethanolamine + CO2. It participates in phospholipid metabolism; phosphatidylethanolamine biosynthesis; phosphatidylethanolamine from CDP-diacylglycerol: step 2/2. Functionally, catalyzes the formation of phosphatidylethanolamine (PtdEtn) from phosphatidylserine (PtdSer). In Chlorobium phaeovibrioides (strain DSM 265 / 1930) (Prosthecochloris vibrioformis (strain DSM 265)), this protein is Phosphatidylserine decarboxylase proenzyme.